Here is a 206-residue protein sequence, read N- to C-terminus: Large ribosomal subunit protein uL4 (206 aa).

Positions 47 to 71 (TRAQKGRSEVAGSTRKQWRQKGTGR) are disordered.

The protein belongs to the universal ribosomal protein uL4 family. Part of the 50S ribosomal subunit.

Its function is as follows. One of the primary rRNA binding proteins, this protein initially binds near the 5'-end of the 23S rRNA. It is important during the early stages of 50S assembly. It makes multiple contacts with different domains of the 23S rRNA in the assembled 50S subunit and ribosome. Forms part of the polypeptide exit tunnel. In Nitrosomonas eutropha (strain DSM 101675 / C91 / Nm57), this protein is Large ribosomal subunit protein uL4.